The chain runs to 60 residues: Large ribosomal subunit protein bL32 (60 aa).

This sequence belongs to the bacterial ribosomal protein bL32 family.

This Streptococcus suis (strain 05ZYH33) protein is Large ribosomal subunit protein bL32.